A 242-amino-acid polypeptide reads, in one-letter code: ATP synthase subunit a (242 aa).

6 consecutive transmembrane segments (helical) span residues 29 to 49 (SAVAMIFVSIAASLLLIIAFV), 83 to 103 (VFFPLILTLFLFISLGNIIGM), 114 to 134 (IIVTFSLAMIVFTTTLVYGIY), 140 to 160 (FFSLFLPKNIPLWLAPIMVII), 181 to 201 (VAGHILLKIIAWSIVSLTWFF), and 206 to 226 (IALVIVLIGFELFISILQAYI).

The protein belongs to the ATPase A chain family. As to quaternary structure, F-type ATPases have 2 components, CF(1) - the catalytic core - and CF(0) - the membrane proton channel. CF(1) has five subunits: alpha(3), beta(3), gamma(1), delta(1), epsilon(1). CF(0) has three main subunits: a(1), b(2) and c(9-12). The alpha and beta chains form an alternating ring which encloses part of the gamma chain. CF(1) is attached to CF(0) by a central stalk formed by the gamma and epsilon chains, while a peripheral stalk is formed by the delta and b chains.

The protein resides in the cell inner membrane. Functionally, key component of the proton channel; it plays a direct role in the translocation of protons across the membrane. This Orientia tsutsugamushi (strain Boryong) (Rickettsia tsutsugamushi) protein is ATP synthase subunit a.